Reading from the N-terminus, the 294-residue chain is Probable enoyl-CoA hydratase 2 (294 aa).

Residues 84–85, lysine 113, 190–195, glycine 213, and phenylalanine 243 contribute to the (3R)-3-hydroxydecanoyl-CoA site; these read HG and DLNPLH. The MaoC-like domain maps to 165-269; the sequence is DRAPDAISKQ…INPTTILFQS (105 aa). A Microbody targeting signal motif is present at residues 292 to 294; that stretch reads GSL.

It belongs to the short-chain dehydrogenases/reductases (SDR) family.

It is found in the peroxisome. The enzyme catalyses a (3R)-3-hydroxyacyl-CoA = a (2E)-enoyl-CoA + H2O. The protein is Probable enoyl-CoA hydratase 2 (mfeB) of Dictyostelium discoideum (Social amoeba).